The following is a 127-amino-acid chain: DNA-directed RNA polymerases I, II, and III subunit RPABC2 (127 aa).

The segment covering 1–34 (MSDNEDNFDGDDFDDVEEDEGLDDLENAEEEGQE) has biased composition (acidic residues). Residues 1 to 53 (MSDNEDNFDGDDFDDVEEDEGLDDLENAEEEGQENVEILPSGERPQANQKRIT) form a disordered region. Ser2 carries the N-acetylserine modification. Position 2 is a phosphoserine; by CK2 (Ser2).

It belongs to the archaeal Rpo6/eukaryotic RPB6 RNA polymerase subunit family. In terms of assembly, component of the RNA polymerase I (Pol I), RNA polymerase II (Pol II) and RNA polymerase III (Pol III) complexes consisting of at least 13, 12 and 17 subunits, respectively. Pol I complex consists of a ten-subunit catalytic core composed of POLR1A/RPA1, POLR1B/RPA2, POLR1C/RPAC1, POLR1D/RPAC2, POLR1H/RPA12, POLR2E/RPABC1, POLR2F/RPABC2, POLR2H/RPABC3, POLR2K/RPABC4 and POLR2L/RPABC5; a mobile stalk subunit POLR1F/RPA43 protruding from the core and additional subunits homologous to general transcription factors POLR1E/RPA49 and POLR1G/RPA34. Part of Pol I pre-initiation complex (PIC), in which Pol I core assembles with RRN3 and promoter-bound UTBF and SL1/TIF-IB complex. Pol II complex contains a ten-subunit catalytic core composed of POLR2A/RPB1, POLR2B/RPB2, POLR2C/RPB3, POLR2I/RPB9, POLR2J/RPB11, POLR2E/RPABC1, POLR2F/RPABC2, POLR2H/RPABC3, POLR2K/RPABC4 and POLR2L/RPABC5 and a mobile stalk composed of two subunits POLR2D/RPB4 and POLR2G/RPB7. Part of Pol II(G) complex, in which Pol II core associates with an additional subunit POLR2M; unlike conventional Pol II, Pol II(G) functions as a transcriptional repressor. Part of TBP-based Pol II pre-initiation complex (PIC), in which Pol II core assembles with general transcription factors and other specific initiation factors including GTF2E1, GTF2E2, GTF2F1, GTF2F2, TCEA1, ERCC2, ERCC3, GTF2H2, GTF2H3, GTF2H4, GTF2H5, GTF2A1, GTF2A2, GTF2B and TBP; this large multi-subunit PIC complex mediates DNA unwinding and targets Pol II core to the transcription start site where the first phosphodiester bond forms. Pol III complex consists of a ten-subunit catalytic core composed of POLR3A/RPC1, POLR3B/RPC2, POLR1C/RPAC1, POLR1D/RPAC2, POLR3K/RPC10, POLR2E/RPABC1, POLR2F/RPABC2, POLR2H/RPABC3, POLR2K/RPABC4 and POLR2L/RPABC5; a mobile stalk composed of two subunits POLR3H/RPC8 and CRCP/RPC9, protruding from the core and functioning primarily in transcription initiation; and additional subunits homologous to general transcription factors of the RNA polymerase II machinery, POLR3C/RPC3-POLR3F/RPC6-POLR3G/RPC7 heterotrimer required for transcription initiation and POLR3D/RPC4-POLR3E/RPC5 heterodimer involved in both transcription initiation and termination.

The protein resides in the nucleus. The protein localises to the nucleolus. Its function is as follows. DNA-dependent RNA polymerase catalyzes the transcription of DNA into RNA using the four ribonucleoside triphosphates as substrates. Common component of RNA polymerases I, II, and III which synthesize ribosomal RNA precursors, mRNA precursors and many functional non-coding RNAs, and small RNAs, such as 5S rRNA and tRNAs, respectively. Pol II is the central component of the basal RNA polymerase II transcription machinery. Pols are composed of mobile elements that move relative to each other. In Pol II, POLR2F/RPABC2 is part of the clamp element and together with parts of POLR2A/RPB1 and POLR2B/RPB2 forms a pocket to which the POLR2D/RPB4-POLR2G/RPB7 subcomplex binds. The sequence is that of DNA-directed RNA polymerases I, II, and III subunit RPABC2 from Homo sapiens (Human).